Consider the following 446-residue polypeptide: COBRA-like protein 1 (446 aa).

Positions 1–28 are cleaved as a signal peptide; that stretch reads MALLLLRMGVSVALLVAFFSSLIPSSEA. 9 N-linked (GlcNAc...) asparagine glycosylation sites follow: Asn-37, Asn-162, Asn-170, Asn-209, Asn-234, Asn-316, Asn-331, Asn-350, and Asn-419. The GPI-anchor amidated alanine moiety is linked to residue Ala-420. Residues 421-446 constitute a propeptide, removed in mature form; sequence STRVMSSILLPFITIWTALTFLMVYA.

The protein belongs to the COBRA family.

The protein localises to the cell membrane. Its function is as follows. Involved in determining the orientation of cell expansion, probably by playing an important role in cellulose deposition. May act by recruiting cellulose synthesizing complexes to discrete positions on the cell surface. The protein is COBRA-like protein 1 (BC1L6) of Oryza sativa subsp. japonica (Rice).